A 149-amino-acid polypeptide reads, in one-letter code: MGLFNFVKDAGEKLWDAVTGQHDKDDQAKKVQEHLNKTGIPDADKVNIQIADGKATVTGDGLSQEAKEKILVAVGNISGIASVDDQVKTATPATASQFYTVKSGDTLSAISKQVYGNANLYNKIFEANKPMLKSPDKIYPGQVLRIPEE.

The BON domain maps to 23–91; that stretch reads DKDDQAKKVQ…SVDDQVKTAT (69 aa). Positions 97-146 constitute a LysM domain; the sequence is QFYTVKSGDTLSAISKQVYGNANLYNKIFEANKPMLKSPDKIYPGQVLRI.

The protein localises to the cytoplasm. Functionally, highly specific potassium binding protein that is required for normal growth in the presence of high levels of external K(+). May act as a sensor of cytoplasmic K(+) concentration. The chain is Potassium binding protein Kbp from Escherichia coli O6:H1 (strain CFT073 / ATCC 700928 / UPEC).